The primary structure comprises 86 residues: U15-lycotoxin-Ls1c (86 aa).

An N-terminal signal peptide occupies residues 1 to 20 (MNSKIFAVLLLLAFLSCVLS). One can recognise a WAP domain in the interval 21-66 (DQYCPKSSITACKKMNIRNDCCKDDDCTGGSWCCATPCGNICKYPT). Disulfide bonds link Cys-24/Cys-54, Cys-32/Cys-58, Cys-41/Cys-53, Cys-42/Cys-80, and Cys-47/Cys-62.

The protein belongs to the venom protein 11 family. 01 (wap-1) subfamily. In terms of processing, contains 5 disulfide bonds. In terms of tissue distribution, expressed by the venom gland.

Its subcellular location is the secreted. Functionally, has antibacterial activity. The polypeptide is U15-lycotoxin-Ls1c (Lycosa singoriensis (Wolf spider)).